Reading from the N-terminus, the 32-residue chain is Hainantoxin F8-35.23 (32 aa).

Expressed by the venom gland.

The protein resides in the secreted. The protein is Hainantoxin F8-35.23 of Cyriopagopus hainanus (Chinese bird spider).